Reading from the N-terminus, the 388-residue chain is 3-ketoacyl-CoA thiolase (388 aa).

C91 acts as the Acyl-thioester intermediate in catalysis. Catalysis depends on proton acceptor residues H343 and C373.

Belongs to the thiolase-like superfamily. Thiolase family. In terms of assembly, heterotetramer of two alpha chains (FadB) and two beta chains (FadA).

Its subcellular location is the cytoplasm. The enzyme catalyses an acyl-CoA + acetyl-CoA = a 3-oxoacyl-CoA + CoA. It participates in lipid metabolism; fatty acid beta-oxidation. Catalyzes the final step of fatty acid oxidation in which acetyl-CoA is released and the CoA ester of a fatty acid two carbons shorter is formed. The polypeptide is 3-ketoacyl-CoA thiolase (Photorhabdus laumondii subsp. laumondii (strain DSM 15139 / CIP 105565 / TT01) (Photorhabdus luminescens subsp. laumondii)).